The following is a 452-amino-acid chain: uncharacterized protein (452 aa).

Its subcellular location is the cytoplasm. It is found in the nucleus. This is an uncharacterized protein from Schizosaccharomyces pombe (strain 972 / ATCC 24843) (Fission yeast).